A 371-amino-acid polypeptide reads, in one-letter code: Pyruvate dehydrogenase E1 component subunit alpha (371 aa).

As to quaternary structure, heterodimer of an alpha and a beta chain. Thiamine diphosphate serves as cofactor.

It catalyses the reaction N(6)-[(R)-lipoyl]-L-lysyl-[protein] + pyruvate + H(+) = N(6)-[(R)-S(8)-acetyldihydrolipoyl]-L-lysyl-[protein] + CO2. In terms of biological role, the pyruvate dehydrogenase complex catalyzes the overall conversion of pyruvate to acetyl-CoA and CO(2). It contains multiple copies of three enzymatic components: pyruvate dehydrogenase (E1), dihydrolipoamide acetyltransferase (E2) and lipoamide dehydrogenase (E3). The sequence is that of Pyruvate dehydrogenase E1 component subunit alpha from Bacillus cereus.